We begin with the raw amino-acid sequence, 167 residues long: SsrA-binding protein (167 aa).

Residues 139–167 (QAHDKRHAEKEREWQRDKQRIMRAHNRNA) form a disordered region. A compositionally biased stretch (basic and acidic residues) spans 144–158 (RHAEKEREWQRDKQR).

Belongs to the SmpB family.

Its subcellular location is the cytoplasm. In terms of biological role, required for rescue of stalled ribosomes mediated by trans-translation. Binds to transfer-messenger RNA (tmRNA), required for stable association of tmRNA with ribosomes. tmRNA and SmpB together mimic tRNA shape, replacing the anticodon stem-loop with SmpB. tmRNA is encoded by the ssrA gene; the 2 termini fold to resemble tRNA(Ala) and it encodes a 'tag peptide', a short internal open reading frame. During trans-translation Ala-aminoacylated tmRNA acts like a tRNA, entering the A-site of stalled ribosomes, displacing the stalled mRNA. The ribosome then switches to translate the ORF on the tmRNA; the nascent peptide is terminated with the 'tag peptide' encoded by the tmRNA and targeted for degradation. The ribosome is freed to recommence translation, which seems to be the essential function of trans-translation. The sequence is that of SsrA-binding protein from Xylella fastidiosa (strain 9a5c).